The primary structure comprises 427 residues: Methylenetetrahydrofolate--tRNA-(uracil-5-)-methyltransferase TrmFO (427 aa).

An FAD-binding site is contributed by 8–13 (GAGISG).

Belongs to the MnmG family. TrmFO subfamily. FAD serves as cofactor.

It is found in the cytoplasm. The catalysed reaction is uridine(54) in tRNA + (6R)-5,10-methylene-5,6,7,8-tetrahydrofolate + NADH + H(+) = 5-methyluridine(54) in tRNA + (6S)-5,6,7,8-tetrahydrofolate + NAD(+). It carries out the reaction uridine(54) in tRNA + (6R)-5,10-methylene-5,6,7,8-tetrahydrofolate + NADPH + H(+) = 5-methyluridine(54) in tRNA + (6S)-5,6,7,8-tetrahydrofolate + NADP(+). In terms of biological role, catalyzes the folate-dependent formation of 5-methyl-uridine at position 54 (M-5-U54) in all tRNAs. This Mycoplasmopsis agalactiae (strain NCTC 10123 / CIP 59.7 / PG2) (Mycoplasma agalactiae) protein is Methylenetetrahydrofolate--tRNA-(uracil-5-)-methyltransferase TrmFO.